Reading from the N-terminus, the 367-residue chain is Germination protease (367 aa).

A propeptide spanning residues 1–15 is cleaved from the precursor; sequence MKEPLDLSKYSIRTD.

Belongs to the peptidase A25 family. Homotetramer. Post-translationally, autoproteolytically processed. The inactive tetrameric zymogen termed p46 autoprocesses to a smaller form termed p41, which is active only during spore germination.

The catalysed reaction is Endopeptidase action with P4 Glu or Asp, P1 preferably Glu &gt; Asp, P1' hydrophobic and P2' Ala.. In terms of biological role, initiates the rapid degradation of small, acid-soluble proteins during spore germination. This chain is Germination protease, found in Bacillus cereus (strain ATCC 14579 / DSM 31 / CCUG 7414 / JCM 2152 / NBRC 15305 / NCIMB 9373 / NCTC 2599 / NRRL B-3711).